The sequence spans 799 residues: Target of rapamycin complex 1 subunit TCO89 (799 aa).

The segment at 18-41 (NASTVSHQSKPFRQFSTRSRAKSN) is disordered. Thr-52 and Thr-82 each carry phosphothreonine. A phosphoserine mark is found at Ser-84, Ser-104, Ser-107, Ser-115, and Ser-144. Residues 97–126 (NQGKRSASFHSPVHNTLLSPKNSSHSNTGT) are compositionally biased toward polar residues. Disordered regions lie at residues 97 to 171 (NQGK…DNIE) and 201 to 284 (LQSP…ADID). The segment covering 147–156 (DAQESKKSES) has biased composition (basic and acidic residues). A compositionally biased stretch (acidic residues) spans 157–170 (TTDEEVECFSEDNI). Phosphoserine is present on residues Ser-203 and Ser-215. Positions 213–224 (DKSGTDGKENHR) are enriched in basic and acidic residues. A compositionally biased stretch (polar residues) spans 233-243 (LSSNNYFGESS). Basic and acidic residues predominate over residues 244 to 253 (HSIEHQKDGE). Over residues 254 to 269 (TSPSSIETKLNATSVI) the composition is skewed to polar residues. Ser-290 is subject to Phosphoserine. The segment at 324 to 391 (AHKSNQKPSH…PDDISSAGTK (68 aa)) is disordered. The span at 332–346 (SHSDEQFDQEDHIDA) shows a compositional bias: basic and acidic residues. The segment covering 348–363 (RSNSSRKSDSSFMSLR) has biased composition (low complexity). Ser-397 is modified (phosphoserine). 2 disordered regions span residues 418 to 476 (FENS…QSTF) and 538 to 568 (NKNSAAPASPLSNEHITSSTNSGSDANRQSN). 2 stretches are compositionally biased toward polar residues: residues 420-429 (NSSSIQNSLG) and 461-476 (GRSQLGQNIPNSQSTF). At Ser-575 the chain carries Phosphoserine. The tract at residues 663 to 685 (IRKKSHNDAQSIAHSSSDTDHKD) is disordered. Ser-707 bears the Phosphoserine mark.

This sequence belongs to the TORC subunit TCO89 family. In terms of assembly, the target of rapamycin complex 1 (TORC1) is composed of at least KOG1, LST8, TCO89 and either TOR1 (TORC1-A) or TOR2 (TORC1-B). Interacts with PIB2; following activation of PIB2 by glutamine or cysteine. TORC1 binds to and is inhibited by FKBP-rapamycin.

It is found in the cell membrane. The protein localises to the vacuole membrane. In terms of biological role, component of TORC1, which regulates multiple cellular processes to control cell growth in response to environmental signals. Nutrient limitation and environmental stress signals cause inactivation of TORC1. Active TORC1 positively controls ribosome biogenesis via control of rRNA, ribosomal protein and tRNA gene expression, and rRNA processing. TORC1 positively controls protein biosynthesis by regulation of mRNA stability, translation initiation factor activity, and high-affinity amino acid permeases that serve to provide amino acids for use by the translation machinery. TORC1 also promotes growth by sequestering a number of nutrient and general stress-responsive transcription factors in the cytoplasm. TORC1 negatively controls macroautophagy, a process to recycle surplus cytoplasmic mass under nutrient starvation conditions. This is Target of rapamycin complex 1 subunit TCO89 (TCO89) from Saccharomyces cerevisiae (strain ATCC 204508 / S288c) (Baker's yeast).